Here is a 95-residue protein sequence, read N- to C-terminus: DNA-directed RNA polymerase subunit Rpo11 (95 aa).

This sequence belongs to the archaeal Rpo11/eukaryotic RPB11/RPC19 RNA polymerase subunit family. Part of the RNA polymerase complex.

Its subcellular location is the cytoplasm. The enzyme catalyses RNA(n) + a ribonucleoside 5'-triphosphate = RNA(n+1) + diphosphate. In terms of biological role, DNA-dependent RNA polymerase (RNAP) catalyzes the transcription of DNA into RNA using the four ribonucleoside triphosphates as substrates. The sequence is that of DNA-directed RNA polymerase subunit Rpo11 from Pyrococcus furiosus (strain ATCC 43587 / DSM 3638 / JCM 8422 / Vc1).